The following is a 220-amino-acid chain: Ribose-5-phosphate isomerase A (220 aa).

Substrate contacts are provided by residues 25-28 (TGST), 80-83 (DGAD), and 93-96 (KGGG). Residue Glu102 is the Proton acceptor of the active site. Lys120 contacts substrate.

This sequence belongs to the ribose 5-phosphate isomerase family. As to quaternary structure, homodimer.

The catalysed reaction is aldehydo-D-ribose 5-phosphate = D-ribulose 5-phosphate. Its pathway is carbohydrate degradation; pentose phosphate pathway; D-ribose 5-phosphate from D-ribulose 5-phosphate (non-oxidative stage): step 1/1. Its function is as follows. Catalyzes the reversible conversion of ribose-5-phosphate to ribulose 5-phosphate. The polypeptide is Ribose-5-phosphate isomerase A (Bacillus cereus (strain ATCC 14579 / DSM 31 / CCUG 7414 / JCM 2152 / NBRC 15305 / NCIMB 9373 / NCTC 2599 / NRRL B-3711)).